Here is a 23-residue protein sequence, read N- to C-terminus: Septenin 2c (23 aa).

In terms of tissue distribution, expressed in skin granular glands.

The protein resides in the secreted. In terms of biological role, may act as an antimicrobial peptide. In Osteopilus septentrionalis (Cuban treefrog), this protein is Septenin 2c.